The following is a 347-amino-acid chain: Phosphate acyltransferase (347 aa).

Belongs to the PlsX family. In terms of assembly, homodimer. Probably interacts with PlsY.

Its subcellular location is the cytoplasm. It catalyses the reaction a fatty acyl-[ACP] + phosphate = an acyl phosphate + holo-[ACP]. It participates in lipid metabolism; phospholipid metabolism. Catalyzes the reversible formation of acyl-phosphate (acyl-PO(4)) from acyl-[acyl-carrier-protein] (acyl-ACP). This enzyme utilizes acyl-ACP as fatty acyl donor, but not acyl-CoA. In Syntrophotalea carbinolica (strain DSM 2380 / NBRC 103641 / GraBd1) (Pelobacter carbinolicus), this protein is Phosphate acyltransferase.